Reading from the N-terminus, the 93-residue chain is Pyrimidine/purine nucleoside phosphorylase (93 aa).

Belongs to the nucleoside phosphorylase PpnP family.

It carries out the reaction a purine D-ribonucleoside + phosphate = a purine nucleobase + alpha-D-ribose 1-phosphate. The enzyme catalyses adenosine + phosphate = alpha-D-ribose 1-phosphate + adenine. It catalyses the reaction cytidine + phosphate = cytosine + alpha-D-ribose 1-phosphate. The catalysed reaction is guanosine + phosphate = alpha-D-ribose 1-phosphate + guanine. It carries out the reaction inosine + phosphate = alpha-D-ribose 1-phosphate + hypoxanthine. The enzyme catalyses thymidine + phosphate = 2-deoxy-alpha-D-ribose 1-phosphate + thymine. It catalyses the reaction uridine + phosphate = alpha-D-ribose 1-phosphate + uracil. The catalysed reaction is xanthosine + phosphate = alpha-D-ribose 1-phosphate + xanthine. Functionally, catalyzes the phosphorolysis of diverse nucleosides, yielding D-ribose 1-phosphate and the respective free bases. Can use uridine, adenosine, guanosine, cytidine, thymidine, inosine and xanthosine as substrates. Also catalyzes the reverse reactions. This Pseudomonas aeruginosa (strain LESB58) protein is Pyrimidine/purine nucleoside phosphorylase.